Reading from the N-terminus, the 318-residue chain is Carnitine monooxygenase reductase subunit (318 aa).

Residues 5–107 (YEMFPAVVTR…SEPKNLFPLA (103 aa)) enclose the FAD-binding FR-type domain. The 2Fe-2S ferredoxin-type domain maps to 233 to 318 (FTVVLAKSNQ…AKGKKLVLDL (86 aa)). Residues C267, C272, C275, and C305 each contribute to the [2Fe-2S] cluster site.

The protein belongs to the PDR/VanB family. CntB subfamily. Composed of an oxygenase subunit (cntA) and a reductase subunit (cntB). It depends on FMN as a cofactor. [2Fe-2S] cluster serves as cofactor.

The catalysed reaction is (R)-carnitine + NADH + O2 + H(+) = (3R)-3-hydroxy-4-oxobutanoate + trimethylamine + NAD(+) + H2O. The enzyme catalyses (R)-carnitine + NADPH + O2 + H(+) = (3R)-3-hydroxy-4-oxobutanoate + trimethylamine + NADP(+) + H2O. The protein operates within amine and polyamine metabolism; carnitine metabolism. Functionally, converts carnitine to trimethylamine and malic semialdehyde. The protein is Carnitine monooxygenase reductase subunit of Acinetobacter baumannii (strain ATCC 19606 / DSM 30007 / JCM 6841 / CCUG 19606 / CIP 70.34 / NBRC 109757 / NCIMB 12457 / NCTC 12156 / 81).